The following is a 333-amino-acid chain: MCMTSPDQLTASESADTASAHKRVLVAAPRGYCAGVDRAVETVEKALEKYGAPVYVRKEIVHNRYVVDTLAERGAIFVDETTEAPEGAHLVFSAHGVSPAVHKEAEALSLKTLDATCPLVTKVHNEVKRFARDGYHILLVGHEGHEEVEGTAGEAPDVTHLVDGVESVDKLPEFLHDEKLIWLSQTTLSVDETMTIVKKLHERFAHLQDPPSDDICYATQNRQVAVKAIAAESDVVIVVGSQNSSNSKRLVEVALQAGAGASYLVDYAHQIDESWLDGATTVGVSSGASVPEILVRGVLEFLDARGFHDVKEITTAAEKITFALPRDLRPART.

Cys33 is a [4Fe-4S] cluster binding site. (2E)-4-hydroxy-3-methylbut-2-enyl diphosphate contacts are provided by His62 and His95. His62 and His95 together coordinate dimethylallyl diphosphate. Isopentenyl diphosphate contacts are provided by His62 and His95. Cys117 lines the [4Fe-4S] cluster pocket. His145 contributes to the (2E)-4-hydroxy-3-methylbut-2-enyl diphosphate binding site. His145 is a dimethylallyl diphosphate binding site. Isopentenyl diphosphate is bound at residue His145. Glu147 serves as the catalytic Proton donor. (2E)-4-hydroxy-3-methylbut-2-enyl diphosphate is bound at residue Thr186. Cys216 contacts [4Fe-4S] cluster. (2E)-4-hydroxy-3-methylbut-2-enyl diphosphate is bound by residues Ser244, Ser245, Asn246, and Ser289. Ser244, Ser245, Asn246, and Ser289 together coordinate dimethylallyl diphosphate. Residues Ser244, Ser245, Asn246, and Ser289 each coordinate isopentenyl diphosphate.

The protein belongs to the IspH family. [4Fe-4S] cluster serves as cofactor.

The enzyme catalyses isopentenyl diphosphate + 2 oxidized [2Fe-2S]-[ferredoxin] + H2O = (2E)-4-hydroxy-3-methylbut-2-enyl diphosphate + 2 reduced [2Fe-2S]-[ferredoxin] + 2 H(+). The catalysed reaction is dimethylallyl diphosphate + 2 oxidized [2Fe-2S]-[ferredoxin] + H2O = (2E)-4-hydroxy-3-methylbut-2-enyl diphosphate + 2 reduced [2Fe-2S]-[ferredoxin] + 2 H(+). It participates in isoprenoid biosynthesis; dimethylallyl diphosphate biosynthesis; dimethylallyl diphosphate from (2E)-4-hydroxy-3-methylbutenyl diphosphate: step 1/1. Its pathway is isoprenoid biosynthesis; isopentenyl diphosphate biosynthesis via DXP pathway; isopentenyl diphosphate from 1-deoxy-D-xylulose 5-phosphate: step 6/6. In terms of biological role, catalyzes the conversion of 1-hydroxy-2-methyl-2-(E)-butenyl 4-diphosphate (HMBPP) into a mixture of isopentenyl diphosphate (IPP) and dimethylallyl diphosphate (DMAPP). Acts in the terminal step of the DOXP/MEP pathway for isoprenoid precursor biosynthesis. This is 4-hydroxy-3-methylbut-2-enyl diphosphate reductase from Corynebacterium diphtheriae (strain ATCC 700971 / NCTC 13129 / Biotype gravis).